We begin with the raw amino-acid sequence, 123 residues long: WAP four-disulfide core domain protein 5 (123 aa).

The N-terminal stretch at 1 to 24 is a signal peptide; the sequence is MRFWSLFLLVVLLAVGGQLPAASG. 2 WAP domains span residues 27–74 and 75–121; these read KGER…VPRI and LVKR…RDPA. 8 cysteine pairs are disulfide-bonded: Cys34–Cys62, Cys41–Cys66, Cys49–Cys61, Cys55–Cys70, Cys81–Cys109, Cys88–Cys113, Cys96–Cys108, and Cys102–Cys117.

It localises to the secreted. Putative acid-stable proteinase inhibitor. This Lemur catta (Ring-tailed lemur) protein is WAP four-disulfide core domain protein 5 (WFDC5).